Consider the following 330-residue polypeptide: Pseudouridine-5'-phosphate glycosidase (330 aa).

Catalysis depends on Glu50, which acts as the Proton donor. 2 residues coordinate substrate: Lys112 and Val132. Asp164 contributes to the Mn(2+) binding site. A substrate-binding site is contributed by 166 to 168 (SSD). The Nucleophile role is filled by Lys185.

It belongs to the pseudouridine-5'-phosphate glycosidase family. Homotrimer. The cofactor is Mn(2+).

It localises to the peroxisome. The catalysed reaction is D-ribose 5-phosphate + uracil = psi-UMP + H2O. Catalyzes the reversible cleavage of pseudouridine 5'-phosphate (PsiMP) to ribose 5-phosphate and uracil. Functions biologically in the cleavage direction, as part of a pseudouridine degradation pathway. Acts together with the pseudouridine kinase PUKI in the peroxisome to prevent toxic pseudouridine monophosphate accumulation. Can catalyze the formation of pseudouridine 5'-phosphate (reverse reaction) in vitro, with a catalytic efficiency 4 times lower than the hydrolysis reaction. The protein is Pseudouridine-5'-phosphate glycosidase of Arabidopsis thaliana (Mouse-ear cress).